The following is a 585-amino-acid chain: Cytochrome c lysine N-methyltransferase 1 (585 aa).

Residues 18-273 (KSLSLKPSTI…KPIEVFISYS (256 aa)) form the SET domain. An SET-like region spans residues 186–288 (LNLSDIKHLY…FSMLVTYGFT (103 aa)).

It belongs to the class V-like SAM-binding methyltransferase superfamily.

The protein resides in the cytoplasm. It is found in the cytosol. The enzyme catalyses L-lysyl-[cytochrome c] + S-adenosyl-L-methionine = N(6)-methyl-L-lysyl-[cytochrome c] + S-adenosyl-L-homocysteine + H(+). Its function is as follows. Methyltransferase which mediates trimethylation of 'Lys-78' of cytochrome c (CYC1). The polypeptide is Cytochrome c lysine N-methyltransferase 1 (CTM1) (Saccharomyces cerevisiae (strain ATCC 204508 / S288c) (Baker's yeast)).